A 542-amino-acid chain; its full sequence is Adenine deaminase (542 aa).

The protein belongs to the metallo-dependent hydrolases superfamily. Adenine deaminase family. It depends on Mn(2+) as a cofactor.

It catalyses the reaction adenine + H2O + H(+) = hypoxanthine + NH4(+). The chain is Adenine deaminase from Methanosphaera stadtmanae (strain ATCC 43021 / DSM 3091 / JCM 11832 / MCB-3).